The following is a 781-amino-acid chain: MSSGGAGEYNEDRHLLRSTDGDEVGIGGGEGDLDVESQSPAIRSGAGGVRDLFKHIDRRFSLSGRRLSFKRMENIRVDRERHNPSSSSAFSAAGEEDGGGISNLHSVDDRNDEYGFDEEVLGDSAPPEWALLLIGCLIGVAAGICVAGFNKGVHVIHEWAWAGTPNEGAAWLRLQRLADTWHRILLIPVTGGVIVGMMHGLLEILDQIRQSNSSQRQGLDFLAGIYPVIKAIQAAVTLGTGCSLGPEGPSVDIGKSCANGFALMMENNRERRIALTAAGAASGIASGFNAAVAGCFFAIETVLRPLRAENSPPFTTAMIILASVISSTVSNALLGTQSAFTVPSYDLKSAAELPLYLILGMLCGAVSVVFSRLVTWFTKSFDFIKDKFGLPAIVCPALGGLGAGIIALKYPGILYWGFTNVEEILHTGKSASAPGIWLLAQLAAAKVVATALCKGSGLVGGLYAPSLMIGAAVGAVFGGSAAEIINRAIPGNAAVAQPQAYALVGMAATLASMCSVPLTSVLLLFELTKDYRILLPLMGAVGLAIWVPSVANQGKESDSSEGRSTGRGYSSLSPSERKTEGVWRHTDNADSLELTVIENPDHNSFLDEETILEDLKVMRVMSKNYVKVSSGTTLREARNILKESHQNCIMVVDDDDFLAGILTHGDIRRYLSNNASTILDENTCPVSSVCTKKISYRGQERGLLTCYPDATVGVAKELMEARGVKQLPVVKRGEVIHKGKRRKLLGLLHYDSIWTFLRDEMSRRRSINDRRKDKEVGTNGH.

2 disordered regions span residues 1–41 (MSSG…QSPA) and 79–98 (RERH…EEDG). The segment covering 10 to 20 (NEDRHLLRSTD) has biased composition (basic and acidic residues). 12 helical membrane-spanning segments follow: residues 129 to 149 (WALL…VAGF), 184 to 204 (ILLI…LLEI), 221 to 241 (FLAG…LGTG), 250 to 270 (SVDI…NNRE), 279 to 299 (GAAS…FFAI), 314 to 334 (FTTA…NALL), 350 to 370 (AAEL…SVVF), 388 to 408 (FGLP…IIAL), 433 to 453 (APGI…TALC), 457 to 477 (GLVG…GAVF), 502 to 522 (ALVG…TSVL), and 523 to 543 (LLFE…AVGL). A disordered region spans residues 553–584 (QGKESDSSEGRSTGRGYSSLSPSERKTEGVWR). Basic and acidic residues predominate over residues 575–584 (SERKTEGVWR). 2 CBS domains span residues 621-677 (MSKN…NAST) and 699-763 (QERG…EMSR). A helical membrane pass occupies residues 726-746 (QLPVVKRGEVIHKGKRRKLLG).

Belongs to the chloride channel (TC 2.A.49) family. As to quaternary structure, homodimer.

It localises to the membrane. In terms of biological role, voltage-gated chloride channel. This Arabidopsis thaliana (Mouse-ear cress) protein is Chloride channel protein CLC-f (CLC-F).